The chain runs to 32 residues: Cytochrome b6-f complex subunit 7 (32 aa).

The helical transmembrane segment at 5 to 25 (IFGTAAIFWVLIPAGLLGGAL) threads the bilayer.

It belongs to the PetM family. In terms of assembly, the 4 large subunits of the cytochrome b6-f complex are cytochrome b6, subunit IV (17 kDa polypeptide, PetD), cytochrome f and the Rieske protein, while the 4 small subunits are PetG, PetL, PetM and PetN. The complex functions as a dimer.

It is found in the cellular thylakoid membrane. In terms of biological role, component of the cytochrome b6-f complex, which mediates electron transfer between photosystem II (PSII) and photosystem I (PSI), cyclic electron flow around PSI, and state transitions. In Prochlorococcus marinus (strain SARG / CCMP1375 / SS120), this protein is Cytochrome b6-f complex subunit 7.